We begin with the raw amino-acid sequence, 106 residues long: UPF0213 protein KPN78578_35340 (106 aa).

The GIY-YIG domain occupies 13-88; it reads VCWFLYLIRT…KQLTKREKER (76 aa).

It belongs to the UPF0213 family.

The polypeptide is UPF0213 protein KPN78578_35340 (Klebsiella pneumoniae subsp. pneumoniae (strain ATCC 700721 / MGH 78578)).